The sequence spans 321 residues: MVGRMERQSASSSASCSPSSSAAGTSSSSSACGGKKRPDILNMIRSATCLNSSSTDTGKGRSKQSSNKVTHGFHLVEGKSGHDMEDYHVAEYKYDKSHELGLFAIFDGHLGDSVPSYLKANLFCNILKEPIFWTNPQEAIKNAYRSTNKYILENAKQLGPGGSTAVTAIVVDGKDMWVANVGDSRAVVCERGAANQLTVDHEPHTTNERQRIEKQGGFVTTFPGDVPRVNGQLAVARAFGDQSLKAHLSSEPDVRHVPINSSIEFVILASDGLWKVMKNQEAVDLVKSIKDPQAAAKRLTTEALARKSKDDISCIVIRFRC.

Disordered regions lie at residues 1–36 (MVGR…GGKK) and 51–70 (NSSS…NKVT). The span at 9 to 31 (SASSSASCSPSSSAAGTSSSSSA) shows a compositional bias: low complexity. Residues 51–69 (NSSSTDTGKGRSKQSSNKV) are compositionally biased toward polar residues. The 250-residue stretch at 70–319 (THGFHLVEGK…DDISCIVIRF (250 aa)) folds into the PPM-type phosphatase domain. Residues Asp107, Gly108, Asp271, and Asp310 each coordinate Mn(2+).

It belongs to the PP2C family. The cofactor is Mg(2+). Mn(2+) is required as a cofactor.

It carries out the reaction O-phospho-L-seryl-[protein] + H2O = L-seryl-[protein] + phosphate. The catalysed reaction is O-phospho-L-threonyl-[protein] + H2O = L-threonyl-[protein] + phosphate. This chain is Probable protein phosphatase 2C 44, found in Oryza sativa subsp. japonica (Rice).